A 116-amino-acid polypeptide reads, in one-letter code: Large ribosomal subunit protein bL19 (116 aa).

Belongs to the bacterial ribosomal protein bL19 family.

This protein is located at the 30S-50S ribosomal subunit interface and may play a role in the structure and function of the aminoacyl-tRNA binding site. The sequence is that of Large ribosomal subunit protein bL19 from Streptomyces avermitilis (strain ATCC 31267 / DSM 46492 / JCM 5070 / NBRC 14893 / NCIMB 12804 / NRRL 8165 / MA-4680).